A 55-amino-acid polypeptide reads, in one-letter code: Large ribosomal subunit protein bL33 (55 aa).

The protein belongs to the bacterial ribosomal protein bL33 family.

The protein is Large ribosomal subunit protein bL33 of Dehalococcoides mccartyi (strain ATCC BAA-2100 / JCM 16839 / KCTC 5957 / BAV1).